The following is an 806-amino-acid chain: Leucine--tRNA ligase (806 aa).

The short motif at 40 to 51 is the 'HIGH' region element; sequence PYPSGAGLHVGH. The short motif at 578–582 is the 'KMSKS' region element; sequence KMSKS. K581 contacts ATP.

The protein belongs to the class-I aminoacyl-tRNA synthetase family.

It localises to the cytoplasm. It carries out the reaction tRNA(Leu) + L-leucine + ATP = L-leucyl-tRNA(Leu) + AMP + diphosphate. The chain is Leucine--tRNA ligase from Staphylococcus aureus (strain MSSA476).